We begin with the raw amino-acid sequence, 244 residues long: Ureidoacrylate amidohydrolase RutB (244 aa).

Catalysis depends on Asp38, which acts as the Proton acceptor. Residue Lys147 is part of the active site. The Nucleophile role is filled by Cys180.

Belongs to the isochorismatase family. RutB subfamily.

It carries out the reaction (Z)-3-ureidoacrylate + H2O + H(+) = (Z)-3-aminoacrylate + NH4(+) + CO2. It catalyses the reaction (Z)-3-ureidoacrylate + H2O = (Z)-3-aminoacrylate + carbamate + H(+). The enzyme catalyses (Z)-2-methylureidoacrylate + H2O + H(+) = (Z)-2-methylaminoacrylate + NH4(+) + CO2. In terms of biological role, hydrolyzes ureidoacrylate to form aminoacrylate and carbamate. The carbamate hydrolyzes spontaneously, thereby releasing one of the nitrogen atoms of the pyrimidine ring as ammonia and one of its carbon atoms as CO2. The sequence is that of Ureidoacrylate amidohydrolase RutB from Escherichia coli O6:H1 (strain CFT073 / ATCC 700928 / UPEC).